The following is a 158-amino-acid chain: Egg cell-secreted protein 1.1 (158 aa).

A signal peptide spans 1–27; the sequence is MASKSSFMATFNIVTLMLMVASSTVTA. The N-linked (GlcNAc...) asparagine glycan is linked to N122.

This sequence belongs to the plant egg cell-secreted peptide family. In terms of tissue distribution, restricted to female reproductive tissues, specifically accumulating in storage vesicles of the unfertilized egg cell.

The protein resides in the cytoplasmic vesicle. It localises to the secreted. Its function is as follows. Involved in the regulation of gamete interactions during the double fertilization and to prevent multiple-pollen tube attraction; mediates the redistribution of the gamete fusogen HAP2/GCS1 to the cell surface after secretion upon sperm arrival. This chain is Egg cell-secreted protein 1.1 (EC1.1), found in Arabidopsis thaliana (Mouse-ear cress).